A 394-amino-acid chain; its full sequence is Dimethyladenosine transferase 2, mitochondrial (394 aa).

The N-terminal 19 residues, 1 to 19 (MWVPGAGIPSRLTLSAFTR), are a transit peptide targeting the mitochondrion. The S-adenosyl-L-methionine site is built by Val75, Glu123, and Asp149. The segment at 326–327 (KR) is DNA-binding.

The protein belongs to the class I-like SAM-binding methyltransferase superfamily. rRNA adenine N(6)-methyltransferase family. KsgA subfamily. As to quaternary structure, homodimer. Component of the mitochondrial transcription initiation complex, composed at least of TFB2M, TFAM and POLRMT. In this complex TFAM recruits POLRMT to the promoter whereas TFB2M induces structural changes in POLRMT to enable promoter opening and trapping of the DNA non-template strand. Interacts with mitochondrial RNA polymerase POLRMT. Interacts with TFAM.

Its subcellular location is the mitochondrion. The catalysed reaction is adenosine in rRNA + S-adenosyl-L-methionine = N(6)-methyladenosine in rRNA + S-adenosyl-L-homocysteine + H(+). In terms of biological role, S-adenosyl-L-methionine-dependent rRNA methyltransferase which may methylate two specific adjacent adenosines in the loop of a conserved hairpin near the 3'-end of 12S mitochondrial rRNA. Component of the mitochondrial transcription initiation complex, composed at least of TFB2M, TFAM and POLRMT that is required for basal transcription of mitochondrial DNA. In this complex TFAM recruits POLRMT to a specific promoter whereas TFB2M induces structural changes in POLRMT to enable promoter opening and trapping of the DNA non-template strand. Stimulates transcription independently of the methyltransferase activity. In Bos taurus (Bovine), this protein is Dimethyladenosine transferase 2, mitochondrial.